Consider the following 976-residue polypeptide: Protein PLASTID MOVEMENT IMPAIRED 1-RELATED 2 (976 aa).

The C2 NT-type domain occupies Ile-81–Val-229. The span at Lys-309–Lys-319 shows a compositional bias: basic and acidic residues. 2 disordered regions span residues Lys-309–Arg-343 and Asn-381–Lys-419. A compositionally biased stretch (low complexity) spans Ser-394 to Asp-414.

Its function is as follows. Seems not necessary for chloroplast and nuclear photorelocation movements. The sequence is that of Protein PLASTID MOVEMENT IMPAIRED 1-RELATED 2 from Arabidopsis thaliana (Mouse-ear cress).